The sequence spans 476 residues: Eukaryotic translation initiation factor 3 subunit L (476 aa).

The region spanning 257 to 452 (DAIRMFSHIL…DLDYALEKDL (196 aa)) is the PCI domain.

It belongs to the eIF-3 subunit L family. In terms of assembly, component of the eukaryotic translation initiation factor 3 (eIF-3) complex.

Its subcellular location is the cytoplasm. Component of the eukaryotic translation initiation factor 3 (eIF-3) complex, which is involved in protein synthesis of a specialized repertoire of mRNAs and, together with other initiation factors, stimulates binding of mRNA and methionyl-tRNAi to the 40S ribosome. The eIF-3 complex specifically targets and initiates translation of a subset of mRNAs involved in cell proliferation. This chain is Eukaryotic translation initiation factor 3 subunit L, found in Emericella nidulans (strain FGSC A4 / ATCC 38163 / CBS 112.46 / NRRL 194 / M139) (Aspergillus nidulans).